The sequence spans 436 residues: MEGDELTQNIEQWKIKRLIDNLDKARGNGTSLISLIIPPREQLPIINKMITEEYGKSSNIKSRIVRQAVQSALTSTKERLKLYNNRLPANGLILYCGEVINEEGVCEKKYTIDFQPYRAINTTLYICDNKFHTQPLKDLLVMDDKFGFIIIDGNGALFGTLQGNTREVLHKFSVDLPKKHRRGGQSALRFSRLRMESRNNYLRKVAEQSVVQFISNDKVNVAGLIIAGSAEFKNVLVQSDLFDQRLAAKVLKIVDVAYGGENGFTQAIELSADTLSNIKFIREKKVMSKFFEEVAQDTKKYCYGVEDTMRSLIMGAIEVILLFENLNFTRYVLKNPTTGAEKTLYLTPEQEENHDNFMENGEELEALEKGPLPEWIVDNYMKFGAGLEFITDRSQEGAQFVRGFGGLGAFLRYQVDMAHLNAGEEELDEEWDDDFM.

The protein belongs to the eukaryotic release factor 1 family. As to quaternary structure, heterodimer of two subunits, one of which binds GTP.

It localises to the cytoplasm. In terms of biological role, directs the termination of nascent peptide synthesis (translation) in response to the termination codons UAA and UAG. In B.musculus UGA codes for tryptophan. The protein is Eukaryotic peptide chain release factor subunit 1 (eRF1) of Blepharisma musculus.